The following is a 503-amino-acid chain: Maturase K (503 aa).

Belongs to the intron maturase 2 family. MatK subfamily.

It is found in the plastid. The protein resides in the chloroplast. Usually encoded in the trnK tRNA gene intron. Probably assists in splicing its own and other chloroplast group II introns. The protein is Maturase K of Rhamnus cathartica (Common buckthorn).